A 227-amino-acid polypeptide reads, in one-letter code: Small ribosomal subunit protein uS3 (227 aa).

Residues 24-94 (LDEYLEEELG…RVSIEVKELP (71 aa)) form the KH type-2 domain. The segment at 207–227 (EEVEDELKELIGKSEDEAEGA) is disordered.

This sequence belongs to the universal ribosomal protein uS3 family. As to quaternary structure, part of the 30S ribosomal subunit.

Functionally, binds the lower part of the 30S subunit head. This chain is Small ribosomal subunit protein uS3, found in Methanopyrus kandleri (strain AV19 / DSM 6324 / JCM 9639 / NBRC 100938).